Consider the following 557-residue polypeptide: MRSDMIKKGFDKAPHRSLLKATGLKDEDFDKPFIAICNSFIEIIPGHKHLNEFGKLVKEAVRAAGMVPFEFNTIGVDDGIAMGHIGMRYSLPSREIIADSVETVVNAHWFDGMICIPNCDKITPGMMMAALRINIPTVFVSGGPMAAGKTSKGEVVDLSSVFEGVGAYQSGKISEEELKDIEDHGCPSCGSCSGMFTANSMNCLCEVLGLALPGNGSILAIDPRREELIKQAAEKLKILIERDIKPRDIVTEEAIDDAFALDMAMGGSTNTVLHTLALAQEAGLDYDMNRIDAVSRRVPHLCKVSPASNWHMEDIDRAGGISAILKEMSRKEGVLHLDRITATGQTLRENIAHAEIQDKEVIHSLENPHSEEGGLRILKGNLAKDGAVIKSGATEVKRFEGPCVIFNSQDEALAGIMLGKVKKGDVVVIRYEGPRGGPGMPEMLAPTSAIAGMGLGADVALLTDGRFSGASRGISVGHISPEAAAGGTIALLEQGDIVCIDVEERLLEVRVSDEELEKRKKGWKRPEPKVKTGWLGRYAQMVTSANTGAVLKIPNFD.

Asp-78 serves as a coordination point for Mg(2+). Residue Cys-119 coordinates [2Fe-2S] cluster. Mg(2+)-binding residues include Asp-120 and Lys-121. Lys-121 carries the N6-carboxylysine modification. Cys-192 serves as a coordination point for [2Fe-2S] cluster. Residue Glu-442 coordinates Mg(2+). Catalysis depends on Ser-468, which acts as the Proton acceptor.

This sequence belongs to the IlvD/Edd family. In terms of assembly, homodimer. It depends on [2Fe-2S] cluster as a cofactor. Mg(2+) serves as cofactor.

The catalysed reaction is (2R)-2,3-dihydroxy-3-methylbutanoate = 3-methyl-2-oxobutanoate + H2O. It carries out the reaction (2R,3R)-2,3-dihydroxy-3-methylpentanoate = (S)-3-methyl-2-oxopentanoate + H2O. Its pathway is amino-acid biosynthesis; L-isoleucine biosynthesis; L-isoleucine from 2-oxobutanoate: step 3/4. The protein operates within amino-acid biosynthesis; L-valine biosynthesis; L-valine from pyruvate: step 3/4. Its function is as follows. Functions in the biosynthesis of branched-chain amino acids. Catalyzes the dehydration of (2R,3R)-2,3-dihydroxy-3-methylpentanoate (2,3-dihydroxy-3-methylvalerate) into 2-oxo-3-methylpentanoate (2-oxo-3-methylvalerate) and of (2R)-2,3-dihydroxy-3-methylbutanoate (2,3-dihydroxyisovalerate) into 2-oxo-3-methylbutanoate (2-oxoisovalerate), the penultimate precursor to L-isoleucine and L-valine, respectively. This is Dihydroxy-acid dehydratase from Bacillus mycoides (strain KBAB4) (Bacillus weihenstephanensis).